We begin with the raw amino-acid sequence, 1551 residues long: Dual oxidase 1 (1551 aa).

An N-terminal signal peptide occupies residues 1–21; the sequence is MGFCLALAWTLLVGAWTPLGA. The Extracellular portion of the chain corresponds to 22-596; that stretch reads QNPISWEVQR…YFEGSGFGFG (575 aa). The interval 26 to 593 is peroxidase-like; mediates peroxidase activity; that stretch reads SWEVQRFDGW…VRDYFEGSGF (568 aa). Asn-94 carries an N-linked (GlcNAc...) asparagine glycan. The interval 150-172 is disordered; that stretch reads RWDPETGRSPSNPRDPANQVTGW. Residues Asn-342, Asn-354, Asn-461, and Asn-534 are each glycosylated (N-linked (GlcNAc...) asparagine). A helical membrane pass occupies residues 597–617; that stretch reads VTIGTLCCFPLVSLLSAWIVA. The Cytoplasmic segment spans residues 618–1044; sequence RLRMRNFKRL…KRFIENYRRH (427 aa). 3 consecutive EF-hand domains span residues 815-850, 851-886, and 895-930; these read PQDMFVESMFSLADKDGNGYLSFREFLDILVVFMKG, SPEEKSRLMFRMYDFDGNGLISKDEFIRMLRSFIEI, and QLAEVVESMFRESGFQDKEELTWEDFHFMLRDHNSE. 9 residues coordinate Ca(2+): Asp-828, Asp-830, Asn-832, Tyr-834, Glu-839, Asp-864, Asp-866, Asn-868, and Glu-875. The interval 956–1248 is interaction with TXNDC11; the sequence is YISQDMICPS…GSFALIQLPR (293 aa). Residues 1045–1065 form a helical membrane-spanning segment; sequence IGCVAVFYAIAGGLFLERAYY. The Extracellular segment spans residues 1066–1080; sequence YAFAAHHTGITDTTR. Residues 1081-1101 form a helical membrane-spanning segment; that stretch reads VGIILSRGTAASISFMFSYIL. The Ferric oxidoreductase domain occupies 1087 to 1269; that stretch reads RGTAASISFM…YGGDKLVSLS (183 aa). Topologically, residues 1102-1148 are cytoplasmic; sequence LTMCRNLITFLRETFLNRYVPFDAAVDFHRLIASTAIVLTVLHSVGH. The helical transmembrane segment at 1149–1171 threads the bilayer; that stretch reads VVNVYLFSISPLSVLSCLFPGLF. At 1172-1188 the chain is on the extracellular side; that stretch reads HDDGSELPQKYYWWFFQ. A helical transmembrane segment spans residues 1189–1209; it reads TVPGLTGVVLLLILAIMYVFA. Residues 1210 to 1226 are Cytoplasmic-facing; sequence SHHFRRRSFRGFWLTHH. A helical membrane pass occupies residues 1227–1247; the sequence is LYILLYVLLIIHGSFALIQLP. Arg-1248 is a topological domain (extracellular). A helical transmembrane segment spans residues 1249 to 1269; the sequence is FHIFFLVPAIIYGGDKLVSLS. Residues 1270–1376 form the FAD-binding FR-type domain; sequence RKKVEISVVK…DGPFGEGHQE (107 aa). Residues 1270–1551 lie on the Cytoplasmic side of the membrane; sequence RKKVEISVVK…THFSHHYENF (282 aa).

It in the N-terminal section; belongs to the peroxidase family. As to quaternary structure, interacts with TXNDC11, TPO and CYBA. Post-translationally, N-glycosylated. Expressed in thyrocytes and tracheal surface epithelial cells (at protein level). Expressed in thyroid, trachea, bronchium, and to a lower extent, in placenta, testis, prostate, pancreas and heart.

The protein resides in the apical cell membrane. The enzyme catalyses NADH + O2 + H(+) = H2O2 + NAD(+). It carries out the reaction NADPH + O2 + H(+) = H2O2 + NADP(+). The protein operates within hormone biosynthesis; thyroid hormone biosynthesis. The NADPH oxidase activity is calcium-dependent. Peroxidase activity is inhibited by aminobenzohydrazide. In terms of biological role, generates hydrogen peroxide which is required for the activity of thyroid peroxidase/TPO and lactoperoxidase/LPO. Plays a role in thyroid hormones synthesis and lactoperoxidase-mediated antimicrobial defense at the surface of mucosa. May have its own peroxidase activity through its N-terminal peroxidase-like domain. The protein is Dual oxidase 1 (DUOX1) of Homo sapiens (Human).